The following is a 663-amino-acid chain: Dual specificity protein phosphatase 8 (663 aa).

Positions 23-138 (GPGGPLVIDS…FSSCFPGLCE (116 aa)) constitute a Rhodanese domain. Residues 160 to 302 (GLTRILPHLY…LLEYERSLKL (143 aa)) enclose the Tyrosine-protein phosphatase domain. Residue Cys246 is the Phosphocysteine intermediate of the active site. 2 disordered regions span residues 313 to 367 (LGTP…STAP) and 404 to 624 (YAPS…FKRR). Composition is skewed to low complexity over residues 334–353 (STSE…REGS), 427–448 (LDSP…PDSV), and 546–557 (SAGAPGPGNSSS). A compositionally biased stretch (gly residues) spans 558 to 577 (SGGGGGGGGGGGGGGGGGGS). Positions 578–600 (SSSNSSSSSSSSSSSSSSSSSSS) are enriched in low complexity.

Belongs to the protein-tyrosine phosphatase family. Non-receptor class dual specificity subfamily. Monomer. Expressed predominantly in brain and lung.

It localises to the cytoplasm. The protein localises to the nucleus. It carries out the reaction O-phospho-L-tyrosyl-[protein] + H2O = L-tyrosyl-[protein] + phosphate. The enzyme catalyses O-phospho-L-seryl-[protein] + H2O = L-seryl-[protein] + phosphate. The catalysed reaction is O-phospho-L-threonyl-[protein] + H2O = L-threonyl-[protein] + phosphate. Functionally, has phosphatase activity with synthetic phosphatase substrates and negatively regulates mitogen-activated protein kinase activity, presumably by catalysing their dephosphorylation. Expected to display protein phosphatase activity toward phosphotyrosine, phosphoserine and phosphothreonine residues. The chain is Dual specificity protein phosphatase 8 (Dusp8) from Mus musculus (Mouse).